Consider the following 181-residue polypeptide: ADP-ribosylation factor 1-like 2 (181 aa).

Gly2 is lipidated: N-myristoyl glycine. The interval 3-16 (NVFGSLFKGLFGKK) is important for the stable binding to the membranes. Residues 24–32 (GLDAAGKTT), 126–129 (NKQD), and Ala160 each bind GTP.

It belongs to the small GTPase superfamily. Arf family.

The protein resides in the golgi apparatus membrane. It carries out the reaction GTP + H2O = GDP + phosphate + H(+). Alternates between an inactive GDP-bound form and an active GTP-bound form. Activated by a guanine nucleotide-exchange factor (GEF) and inactivated by GTPase-activating protein (GAP). In terms of biological role, small GTPase involved in protein trafficking between different compartments. Modulates vesicle budding and uncoating within the Golgi complex. In its GTP-bound form, triggers the recruitment of coatomer proteins to the Golgi membrane. The hydrolysis of ARF1-bound GTP, which is mediated by ARFGAPs proteins, is required for dissociation of coat proteins from Golgi membranes and vesicles. Involved in endoplasmic reticulum dynamics during embryogenesis. Also required for adult germline function. Plays a role in cell shedding during embryogenesis probably by promoting the endocytosis of cell adhesion molecules. During neurogenesis, involved in cell autonomous Q.p neuroblast asymmetric divisions that generate one precursor cell and one apoptotic cell, probably by controlling endocytosis. Plays a role in maintaining mitochondrial morphology. The chain is ADP-ribosylation factor 1-like 2 (arf-1.2) from Caenorhabditis briggsae.